Reading from the N-terminus, the 146-residue chain is Snaclec coagulation factor IX/factor X-binding protein subunit B (146 aa).

An N-terminal signal peptide occupies residues 1–23; it reads MGRFIFLSFGLLVVFLSLSGTGA. 3 disulfide bridges follow: cysteine 25–cysteine 36, cysteine 53–cysteine 142, and cysteine 119–cysteine 134. One can recognise a C-type lectin domain in the interval 32-143; that stretch reads YEGHCYKPFN…CRMEAYFVCE (112 aa). Ca(2+) contacts are provided by serine 64 and glutamate 70. Glutamate 143 contributes to the Ca(2+) binding site.

Belongs to the snaclec family. In terms of assembly, heterodimer with subunit A of IX/X-bp or IX-bp; disulfide-linked. In terms of tissue distribution, expressed by the venom gland.

Its subcellular location is the secreted. Functionally, when linked to subunit A of IX/X-bp, anticoagulant protein which binds to the gamma-carboxyglutamic acid-domain regions of factors IX (F9) and factor X (F10) in the presence of calcium with a 1 to 1 stoichiometry. Its function is as follows. When linked to subunit A of IX-bp, anticoagulant protein which binds to the gamma-carboxyglutamic acid-domain regions of factor IX (but not to factor X) in the presence of calcium with a 1 to 1 stoichiometry. This Gloydius halys (Chinese water mocassin) protein is Snaclec coagulation factor IX/factor X-binding protein subunit B.